The sequence spans 462 residues: Nuclear distribution protein PAC1 (462 aa).

In terms of domain architecture, LisH spans 9–41 (QAEELHKAIIAYLGVINAPKTAAAFREEVNFSA). Positions 60–87 (TSVVRLQKKVLELEQRNQSLQSELDSTT) form a coiled coil. Residues 78 to 99 (SLQSELDSTTPTSLLRRNQDPS) are compositionally biased toward polar residues. A disordered region spans residues 78 to 103 (SLQSELDSTTPTSLLRRNQDPSSWLP). 8 WD repeats span residues 113-154 (SHRS…RTVK), 156-196 (HTKG…KNIR), 200-247 (GHDH…CVKT), 250-289 (GHAD…AKCT), 292-352 (GHEH…IKTL), 354-393 (GHDN…RCVK), 398-445 (AHSH…AGIR), and 447-462 (VIAT…IFAS). Positions 414–434 (KDAPTNGDAPNGTTANGASKK) are disordered.

The protein belongs to the WD repeat LIS1/nudF family. Self-associates. Interacts with NDL1 and dynein.

The protein localises to the cytoplasm. Its subcellular location is the cytoskeleton. It localises to the spindle pole. Functionally, positively regulates the activity of the minus-end directed microtubule motor protein dynein. May enhance dynein-mediated microtubule sliding by targeting dynein to the microtubule plus end. Required for nuclear migration during vegetative growth as well as development. Required for retrograde early endosome (EE) transport from the hyphal tip. Required for localization of dynein to the mitotic spindle poles. Recruits additional proteins to the dynein complex at SPBs. The polypeptide is Nuclear distribution protein PAC1 (Phaeosphaeria nodorum (strain SN15 / ATCC MYA-4574 / FGSC 10173) (Glume blotch fungus)).